The primary structure comprises 28 residues: Somatostatin-2 (28 aa).

An intrachain disulfide couples cysteine 17 to cysteine 28.

The protein belongs to the somatostatin family.

It is found in the secreted. Functionally, somatostatin inhibits the release of somatotropin. The protein is Somatostatin-2 (sst2) of Oreochromis niloticus (Nile tilapia).